The following is a 353-amino-acid chain: GTPase Obg (353 aa).

Positions 1–159 constitute an Obg domain; that stretch reads MKFVDEVRIH…RDLVLELKLL (159 aa). In terms of domain architecture, OBG-type G spans 160–333; the sequence is ADVGIVGYPN…LMDAVGRALY (174 aa). GTP-binding positions include 166–173, 191–195, 212–215, 283–286, and 314–316; these read GYPNAGKS, FTTLV, DIPG, TKID, and SAV. Residues serine 173 and threonine 193 each coordinate Mg(2+).

The protein belongs to the TRAFAC class OBG-HflX-like GTPase superfamily. OBG GTPase family. As to quaternary structure, monomer. It depends on Mg(2+) as a cofactor.

The protein resides in the cytoplasm. An essential GTPase which binds GTP, GDP and possibly (p)ppGpp with moderate affinity, with high nucleotide exchange rates and a fairly low GTP hydrolysis rate. Plays a role in control of the cell cycle, stress response, ribosome biogenesis and in those bacteria that undergo differentiation, in morphogenesis control. The polypeptide is GTPase Obg (Anaeromyxobacter sp. (strain Fw109-5)).